The sequence spans 991 residues: Phosphate metabolism protein 7 (991 aa).

Over 1–9 (MADSSSTSA) the chain is Extracellular. The chain crosses the membrane as a helical span at residues 10–30 (FISTLIIYGLTAVVFVWLFLL). Over 31-91 (LRPKNRRVYE…TSVDGYFLLR (61 aa)) the chain is Cytoplasmic. Residues 92–112 (YIGIVGSLSFVGCLLLLPILL) form a helical membrane-spanning segment. Topologically, residues 113-138 (PVNATNGNNLQGFELLSFSNVTNKNR) are extracellular. Asparagine 115 and asparagine 132 each carry an N-linked (GlcNAc...) asparagine glycan. Residues 139-159 (FYAHVFLSWIFFGLFTYVIYK) traverse the membrane as a helical segment. The Cytoplasmic segment spans residues 160-388 (ELYYYVVFRH…ERHSRRAVAN (229 aa)). A helical membrane pass occupies residues 389-409 (TIMVLLIIFWAFPVAVVGIIS). Over 410–437 (NVNFLTDKVPFLRFINNMPTFLMGVITG) the chain is Extracellular. Residues 438-458 (LLPTIALVVLMSLVPPFIVML) form a helical membrane-spanning segment. Residues 459–471 (GKLSGCVTRQETD) are Cytoplasmic-facing. Residues 472-492 (LYSQAWYYAFAVIQIFLVVTA) form a helical membrane-spanning segment. The Extracellular portion of the chain corresponds to 493-523 (TSSASSTVDSIIDRPRSAMTLLANNLPKASN). The chain crosses the membrane as a helical span at residues 524-544 (FYIMYFILKGLTGPTWTILQA). At 545 to 582 (VNLLLSKVLGRVLDSTPRQKWNRYNTLATPRMGIVYPG) the chain is on the cytoplasmic side. A helical membrane pass occupies residues 583-603 (IEILVCIYICYSIIAPILLFF). A topological domain (extracellular) is located at residue serine 604. Residues 605-625 (TVMLTLLYVAYLYNLNYVFGF) form a helical membrane-spanning segment. Residues 626-637 (SFDLKGRNYPRA) are Cytoplasmic-facing. The helical transmembrane segment at 638–658 (LFQIFVGIYLSEVCLLGLFIM) threads the bilayer. Over 659 to 661 (AKT) the chain is Extracellular. A helical transmembrane segment spans residues 662 to 682 (WGPLVLEVFWIVVTALAHIYM). Residues 683–991 (KRKFIPLFDA…PPDYEPEAKK (309 aa)) are Cytoplasmic-facing. Positions 749–787 (KANLIPDNDGSSENGTPSNPFESGSERASLSGSNAESDS) are disordered. The span at 757–785 (DGSSENGTPSNPFESGSERASLSGSNAES) shows a compositional bias: polar residues.

This sequence belongs to the CSC1 (TC 1.A.17) family.

It is found in the cell membrane. In terms of biological role, acts as an osmosensitive calcium-permeable cation channel. This Saccharomyces cerevisiae (strain ATCC 204508 / S288c) (Baker's yeast) protein is Phosphate metabolism protein 7 (PHM7).